The primary structure comprises 78 residues: Small ribosomal subunit protein bS18 (78 aa).

Belongs to the bacterial ribosomal protein bS18 family. In terms of assembly, part of the 30S ribosomal subunit. Forms a tight heterodimer with protein bS6.

Functionally, binds as a heterodimer with protein bS6 to the central domain of the 16S rRNA, where it helps stabilize the platform of the 30S subunit. The sequence is that of Small ribosomal subunit protein bS18 from Alkaliphilus oremlandii (strain OhILAs) (Clostridium oremlandii (strain OhILAs)).